The sequence spans 330 residues: GMP reductase (330 aa).

Residue cysteine 180 is the Thioimidate intermediate of the active site. 209 to 232 (LIADGGIRHNGDIAKSVRFGASMV) is an NADP(+) binding site.

This sequence belongs to the IMPDH/GMPR family. GuaC type 2 subfamily.

It carries out the reaction IMP + NH4(+) + NADP(+) = GMP + NADPH + 2 H(+). Functionally, catalyzes the irreversible NADPH-dependent deamination of GMP to IMP. It functions in the conversion of nucleobase, nucleoside and nucleotide derivatives of G to A nucleotides, and in maintaining the intracellular balance of A and G nucleotides. This is GMP reductase from Lactobacillus gasseri (strain ATCC 33323 / DSM 20243 / BCRC 14619 / CIP 102991 / JCM 1131 / KCTC 3163 / NCIMB 11718 / NCTC 13722 / AM63).